Reading from the N-terminus, the 337-residue chain is Quercetin 2,3-dioxygenase (337 aa).

Cupin type-2 domains lie at 55–110 (KGDA…MQSH) and 226–281 (PKGD…RLDS). Residues histidine 62, histidine 64, glutamate 69, histidine 103, histidine 234, histidine 236, glutamate 241, and histidine 275 each contribute to the Fe cation site.

As to quaternary structure, homodimer. Fe(2+) serves as cofactor.

It catalyses the reaction quercetin + O2 = 2-(3,4-dihydroxybenzoyloxy)-4,6-dihydroxybenzoate + CO. It participates in flavonoid metabolism; quercetin degradation. Performs the first step in the degradation of the flavonoid quercetin by a dioxygenase reaction. The enzyme catalyzes the cleavage of the O-heteroaromatic ring of the flavonol quercetin yielding the depside 2-protocatechuoyl-phloroglucinol carboxylic acid and carbon monoxide. This involves the remarkable dioxygenolytic cleavage of two carbon-carbon bonds. This Bacillus subtilis (strain 168) protein is Quercetin 2,3-dioxygenase (qdoI).